We begin with the raw amino-acid sequence, 394 residues long: Nuclear hormone receptor family member nhr-18 (394 aa).

The segment at residues 8-83 is a DNA-binding region (nuclear receptor); the sequence is SGSCEVCGDK…VGMDTRRFQT (76 aa). NR C4-type zinc fingers lie at residues 11–31 and 48–71; these read CEVCGDKTSGRHFGVMSCRAC and CPNGTCHTSVNGKFNCKQCRLKKC. The region spanning 134-394 is the NR LBD domain; that stretch reads MLQKPTNHVL…FSHPEMFEAT (261 aa).

It belongs to the nuclear hormone receptor family.

The protein resides in the nucleus. Its function is as follows. Orphan nuclear receptor. This chain is Nuclear hormone receptor family member nhr-18 (nhr-18), found in Caenorhabditis elegans.